The following is a 1203-amino-acid chain: Nitric oxide synthase 3 (1203 aa).

Positions 1-71 (MGNLKSVAQE…PPEGPKFPRV (71 aa)) are disordered. A lipid anchor (N-myristoyl glycine) is attached at G2. 2 S-palmitoyl cysteine lipidation sites follow: C15 and C26. Residues 15–27 (CGLGLGLGLGLCG) are compositionally biased toward gly residues. Position 33 is a phosphothreonine (T33). Residues 33 to 66 (TPAPEPSRAPASLLPPAPEHSPPSSPLTQPPEGP) are compositionally biased toward pro residues. Residues C94 and C99 each contribute to the Zn(2+) site. The tract at residues 98-486 (RCLGSLVFPR…PDPWKGSAAK (389 aa)) is interaction with NOSIP. S102 serves as a coordination point for (6R)-L-erythro-5,6,7,8-tetrahydrobiopterin. Position 114 is a phosphoserine; by CDK5 (S114). C184 contributes to the heme b binding site. Residues Q247, W356, Y357, and E361 each coordinate L-arginine. Residue R365 coordinates (6R)-L-erythro-5,6,7,8-tetrahydrobiopterin. N366 contributes to the L-arginine binding site. (6R)-L-erythro-5,6,7,8-tetrahydrobiopterin-binding residues include A446, W447, and F460. Y475 serves as a coordination point for heme b. A calmodulin-binding region spans residues 491 to 510 (TRKKTFKEVANAVKISASLM). Residue T495 is modified to Phosphothreonine; by AMPK. The Flavodoxin-like domain maps to 520 to 703 (ATILYGSETG…AFRGWAQAAF (184 aa)). Residues S526, E527, T528, R530, S572, and T573 each contribute to the FMN site. 3 positions are modified to phosphoserine: S615, S633, and S638. FMN contacts are provided by S654, C661, E687, and Q691. Positions 756–1002 (RKMFQATIRS…IRGAPSFRLP (247 aa)) constitute an FAD-binding FR-type domain. Residue R776 coordinates NADP(+). FAD is bound at residue H798. The residue at position 836 (S836) is a Phosphoserine. The FAD site is built by R938, Y940, S941, T956, A958, Y962, V975, C976, and S977. 7 residues coordinate NADP(+): T1016, R1049, S1078, R1079, K1085, Y1087, and Q1089. T1175 carries the post-translational modification Phosphothreonine. At S1177 the chain carries Phosphoserine; by AMPK. At S1179 the chain carries Phosphoserine.

The protein belongs to the NOS family. As to quaternary structure, homodimer. Interacts with NOSIP and NOSTRIN. Interacts with HSP90AB1. Forms a complex with ASL, ASS1 and SLC7A1; the complex regulates cell-autonomous L-arginine synthesis and citrulline recycling while channeling extracellular L-arginine to nitric oxide synthesis pathway. Requires heme b as cofactor. FAD serves as cofactor. The cofactor is FMN. (6R)-L-erythro-5,6,7,8-tetrahydrobiopterin is required as a cofactor. In terms of processing, phosphorylation by AMPK at Ser-1177 in the presence of Ca(2+)-calmodulin (CaM) activates activity. In absence of Ca(2+)-calmodulin, AMPK also phosphorylates Thr-495, resulting in inhibition of activity. Phosphorylation of Ser-114 by CDK5 reduces activity. Platelets, placenta, liver and kidney.

Its subcellular location is the cell membrane. The protein localises to the membrane. It localises to the caveola. The protein resides in the cytoplasm. It is found in the cytoskeleton. Its subcellular location is the golgi apparatus. The enzyme catalyses 2 L-arginine + 3 NADPH + 4 O2 + H(+) = 2 L-citrulline + 2 nitric oxide + 3 NADP(+) + 4 H2O. Stimulated by calcium/calmodulin. Inhibited by NOSIP and NOSTRIN. Its function is as follows. Produces nitric oxide (NO) which is implicated in vascular smooth muscle relaxation through a cGMP-mediated signal transduction pathway. NO mediates vascular endothelial growth factor (VEGF)-induced angiogenesis in coronary vessels and promotes blood clotting through the activation of platelets. Functionally, lacks eNOS activity, dominant-negative form that may down-regulate eNOS activity by forming heterodimers with isoform 1. This chain is Nitric oxide synthase 3, found in Homo sapiens (Human).